The following is a 397-amino-acid chain: MEKTIAINAGSSSLKFQLYDMPSERVITAGIVERIGLKDSIFTITVDGEKIKEIIDIPDHEIAVQMLLEKLINHKVIGSYDEITGIGHRVVHGGERFPESVYIDDQVIKDIEALSELAPLHNPANVTGIKAFRKILPDVVSVAVFDTAFHQTMPPASYLYSLPYSYYEDYGIRKYGFHGTSHKYVSERAAELLGRPVEELRLLTCHLGNGASIAAIEGGKSMDTSMGFTPLAGVSMGTRSGNIDPALIPFIMEKTGKTAEQVLDVLNKESGMLGVSGISSDLRDLEDEAAKGNDRAELALQVFVDRIHKYIGSYAARMNGVDAIIFTAGIGENSSYIREKVLRGLEFMGVYWDPALNQVRGEERFLNYPHSPVKVIIIPTNEELMIARDVETIKQNH.

N8 is a binding site for Mg(2+). An ATP-binding site is contributed by K15. Position 89 (R89) interacts with substrate. D146 functions as the Proton donor/acceptor in the catalytic mechanism. ATP is bound by residues 206–210 (HLGNG), 281–283 (DLR), and 329–333 (GIGEN). Residue E382 coordinates Mg(2+).

The protein belongs to the acetokinase family. As to quaternary structure, homodimer. Mg(2+) serves as cofactor. It depends on Mn(2+) as a cofactor.

The protein localises to the cytoplasm. The enzyme catalyses acetate + ATP = acetyl phosphate + ADP. The protein operates within metabolic intermediate biosynthesis; acetyl-CoA biosynthesis; acetyl-CoA from acetate: step 1/2. Its function is as follows. Catalyzes the formation of acetyl phosphate from acetate and ATP. Can also catalyze the reverse reaction. The protein is Acetate kinase 1 of Listeria innocua serovar 6a (strain ATCC BAA-680 / CLIP 11262).